Reading from the N-terminus, the 276-residue chain is Large ribosomal subunit protein uL2 (276 aa).

The tract at residues 223–276 (GVAMNPVDHPHGGGEGRGKGHHPTSPWGLPTKGYKTRRGKRPSDKFIVRRRNEV) is disordered. Composition is skewed to basic and acidic residues over residues 230–240 (DHPHGGGEGRG) and 263–276 (RPSDKFIVRRRNEV).

The protein belongs to the universal ribosomal protein uL2 family. As to quaternary structure, part of the 50S ribosomal subunit. Forms a bridge to the 30S subunit in the 70S ribosome.

Functionally, one of the primary rRNA binding proteins. Required for association of the 30S and 50S subunits to form the 70S ribosome, for tRNA binding and peptide bond formation. It has been suggested to have peptidyltransferase activity; this is somewhat controversial. Makes several contacts with the 16S rRNA in the 70S ribosome. The chain is Large ribosomal subunit protein uL2 from Thermotoga maritima (strain ATCC 43589 / DSM 3109 / JCM 10099 / NBRC 100826 / MSB8).